We begin with the raw amino-acid sequence, 333 residues long: Serine racemase (333 aa).

Position 13 (Glu13) interacts with Mg(2+). The ATP site is built by Ser31, Ser32, Ile33, Lys51, and Thr52. The active-site Proton acceptor is the Lys56. N6-(pyridoxal phosphate)lysine is present on Lys56. Ca(2+) is bound at residue Pro69. The residue at position 71 (Thr71) is a Phosphothreonine. Thr81 serves as a coordination point for Ca(2+). The Proton acceptor role is filled by Ser84. Asn86 contacts pyridoxal 5'-phosphate. Gln89 serves as a coordination point for ATP. Cys113 carries the S-nitrosocysteine modification. Tyr121 contributes to the ATP binding site. Residue Asn154 coordinates pyridoxal 5'-phosphate. Residue Asp178 participates in Mg(2+) binding. Positions 185, 186, 187, 188, and 189 each coordinate pyridoxal 5'-phosphate. 4 residues coordinate Mg(2+): Glu210, Ala214, Asp216, and Asn247. Residues Glu210, Ala214, Asp216, and Asn247 each contribute to the Ca(2+) site. 3 residues coordinate Mn(2+): Glu210, Ala214, and Asp216. Lys279 provides a ligand contact to ATP. A pyridoxal 5'-phosphate-binding site is contributed by Ser313. An ATP-binding site is contributed by Asn316.

Belongs to the serine/threonine dehydratase family. In terms of assembly, homodimer. Requires Mg(2+) as cofactor. It depends on Mn(2+) as a cofactor. Ca(2+) serves as cofactor. The cofactor is pyridoxal 5'-phosphate. S-nitrosylated, leading to decrease the enzyme activity. As to expression, expressed in the cerebellum and frontal cortex (at protein level).

It carries out the reaction L-serine = D-serine. It catalyses the reaction D-serine = pyruvate + NH4(+). The enzyme catalyses L-serine = pyruvate + NH4(+). Its activity is regulated as follows. Allosterically activated by magnesium, and possibly also other divalent metal cations. Allosterically activated by ATP, ADP or GTP. Competitively inhibited by malonate. In terms of biological role, catalyzes the synthesis of D-serine from L-serine. D-serine is a key coagonist with glutamate at NMDA receptors. Has dehydratase activity towards both L-serine and D-serine. The sequence is that of Serine racemase (Srr) from Rattus norvegicus (Rat).